The following is a 361-amino-acid chain: Phosphoserine aminotransferase (361 aa).

Position 43 (Arg43) interacts with L-glutamate. Residues 77-78 (AS), Trp103, Thr152, Asp172, and Gln195 contribute to the pyridoxal 5'-phosphate site. Lys196 is subject to N6-(pyridoxal phosphate)lysine. 237–238 (NT) provides a ligand contact to pyridoxal 5'-phosphate.

The protein belongs to the class-V pyridoxal-phosphate-dependent aminotransferase family. SerC subfamily. Homodimer. It depends on pyridoxal 5'-phosphate as a cofactor.

It localises to the cytoplasm. It carries out the reaction O-phospho-L-serine + 2-oxoglutarate = 3-phosphooxypyruvate + L-glutamate. The catalysed reaction is 4-(phosphooxy)-L-threonine + 2-oxoglutarate = (R)-3-hydroxy-2-oxo-4-phosphooxybutanoate + L-glutamate. It participates in amino-acid biosynthesis; L-serine biosynthesis; L-serine from 3-phospho-D-glycerate: step 2/3. The protein operates within cofactor biosynthesis; pyridoxine 5'-phosphate biosynthesis; pyridoxine 5'-phosphate from D-erythrose 4-phosphate: step 3/5. Its function is as follows. Catalyzes the reversible conversion of 3-phosphohydroxypyruvate to phosphoserine and of 3-hydroxy-2-oxo-4-phosphonooxybutanoate to phosphohydroxythreonine. This chain is Phosphoserine aminotransferase, found in Desulfosudis oleivorans (strain DSM 6200 / JCM 39069 / Hxd3) (Desulfococcus oleovorans).